Consider the following 70-residue polypeptide: UPF0337 protein YjbJ (70 aa).

It belongs to the UPF0337 (CsbD) family.

The chain is UPF0337 protein YjbJ (yjbJ) from Salmonella typhi.